The chain runs to 652 residues: Acetyl-coenzyme A synthetase (652 aa).

CoA-binding positions include 191–194 (RAGR), threonine 311, and asparagine 335. ATP is bound by residues 387–389 (GEP), 411–416 (DTWWQT), aspartate 500, and arginine 515. Serine 523 is a binding site for CoA. Arginine 526 provides a ligand contact to ATP. Mg(2+) is bound by residues valine 537, histidine 539, and isoleucine 542. Residue arginine 584 coordinates CoA. Lysine 609 carries the N6-acetyllysine modification.

This sequence belongs to the ATP-dependent AMP-binding enzyme family. The cofactor is Mg(2+). In terms of processing, acetylated. Deacetylation by the SIR2-homolog deacetylase activates the enzyme.

The catalysed reaction is acetate + ATP + CoA = acetyl-CoA + AMP + diphosphate. Its function is as follows. Catalyzes the conversion of acetate into acetyl-CoA (AcCoA), an essential intermediate at the junction of anabolic and catabolic pathways. Acs undergoes a two-step reaction. In the first half reaction, Acs combines acetate with ATP to form acetyl-adenylate (AcAMP) intermediate. In the second half reaction, it can then transfer the acetyl group from AcAMP to the sulfhydryl group of CoA, forming the product AcCoA. Enables the cell to use acetate during aerobic growth to generate energy via the TCA cycle, and biosynthetic compounds via the glyoxylate shunt. Acetylates CheY, the response regulator involved in flagellar movement and chemotaxis. The polypeptide is Acetyl-coenzyme A synthetase (Salmonella typhi).